The primary structure comprises 723 residues: Translation initiation factor IF-2 (723 aa).

The interval 112-138 (KIFNNKKNKKQKPQQAPQQEVQKKKEK) is disordered. Positions 114–123 (FNNKKNKKQK) are enriched in basic residues. The tr-type G domain maps to 224 to 393 (ERPPVVTIMG…LLVSEMEELK (170 aa)). The tract at residues 233–240 (GHVDHGKT) is G1. 233–240 (GHVDHGKT) is a GTP binding site. The interval 258-262 (GITQH) is G2. The G3 stretch occupies residues 279-282 (DTPG). Residues 279–283 (DTPGH) and 333–336 (NKID) each bind GTP. The G4 stretch occupies residues 333 to 336 (NKID). Residues 369–371 (SAL) are G5.

Belongs to the TRAFAC class translation factor GTPase superfamily. Classic translation factor GTPase family. IF-2 subfamily.

It localises to the cytoplasm. Its function is as follows. One of the essential components for the initiation of protein synthesis. Protects formylmethionyl-tRNA from spontaneous hydrolysis and promotes its binding to the 30S ribosomal subunits. Also involved in the hydrolysis of GTP during the formation of the 70S ribosomal complex. In Anoxybacillus flavithermus (strain DSM 21510 / WK1), this protein is Translation initiation factor IF-2.